Reading from the N-terminus, the 124-residue chain is Small ribosomal subunit protein uS12 (124 aa).

3-methylthioaspartic acid is present on aspartate 89.

Belongs to the universal ribosomal protein uS12 family. Part of the 30S ribosomal subunit. Contacts proteins S8 and S17. May interact with IF1 in the 30S initiation complex.

In terms of biological role, with S4 and S5 plays an important role in translational accuracy. Its function is as follows. Interacts with and stabilizes bases of the 16S rRNA that are involved in tRNA selection in the A site and with the mRNA backbone. Located at the interface of the 30S and 50S subunits, it traverses the body of the 30S subunit contacting proteins on the other side and probably holding the rRNA structure together. The combined cluster of proteins S8, S12 and S17 appears to hold together the shoulder and platform of the 30S subunit. The sequence is that of Small ribosomal subunit protein uS12 from Campylobacter hominis (strain ATCC BAA-381 / DSM 21671 / CCUG 45161 / LMG 19568 / NCTC 13146 / CH001A).